Consider the following 381-residue polypeptide: 1-deoxy-D-xylulose 5-phosphate reductoisomerase (381 aa).

NADPH-binding residues include Thr-10, Gly-11, Ser-12, Ile-13, Gly-36, Lys-37, Asn-38, and Asn-120. Residue Lys-121 coordinates 1-deoxy-D-xylulose 5-phosphate. Glu-122 is an NADPH binding site. Asp-146 is a binding site for Mn(2+). Residues Ser-147, Glu-148, Ser-172, and His-195 each coordinate 1-deoxy-D-xylulose 5-phosphate. Position 148 (Glu-148) interacts with Mn(2+). NADPH is bound at residue Gly-201. The 1-deoxy-D-xylulose 5-phosphate site is built by Ser-208, Asn-213, Lys-214, and Glu-217. Glu-217 provides a ligand contact to Mn(2+).

This sequence belongs to the DXR family. It depends on Mg(2+) as a cofactor. Mn(2+) serves as cofactor.

It carries out the reaction 2-C-methyl-D-erythritol 4-phosphate + NADP(+) = 1-deoxy-D-xylulose 5-phosphate + NADPH + H(+). It functions in the pathway isoprenoid biosynthesis; isopentenyl diphosphate biosynthesis via DXP pathway; isopentenyl diphosphate from 1-deoxy-D-xylulose 5-phosphate: step 1/6. Catalyzes the NADPH-dependent rearrangement and reduction of 1-deoxy-D-xylulose-5-phosphate (DXP) to 2-C-methyl-D-erythritol 4-phosphate (MEP). In Lysinibacillus sphaericus (strain C3-41), this protein is 1-deoxy-D-xylulose 5-phosphate reductoisomerase.